An 88-amino-acid polypeptide reads, in one-letter code: Small ribosomal subunit protein uS15 (88 aa).

It belongs to the universal ribosomal protein uS15 family. Part of the 30S ribosomal subunit. Forms a bridge to the 50S subunit in the 70S ribosome, contacting the 23S rRNA.

Functionally, one of the primary rRNA binding proteins, it binds directly to 16S rRNA where it helps nucleate assembly of the platform of the 30S subunit by binding and bridging several RNA helices of the 16S rRNA. Its function is as follows. Forms an intersubunit bridge (bridge B4) with the 23S rRNA of the 50S subunit in the ribosome. The sequence is that of Small ribosomal subunit protein uS15 from Halothermothrix orenii (strain H 168 / OCM 544 / DSM 9562).